The following is a 361-amino-acid chain: Holliday junction branch migration complex subunit RuvB (361 aa).

2 stretches are compositionally biased toward basic and acidic residues: residues 1-13 (MSDVERTEFKLPE) and 33-43 (QGEHDIERSLR). Residues 1-43 (MSDVERTEFKLPEGMDLSSPPQRNQDVDAAEQQGEHDIERSLR) form a disordered region. The segment at 2–203 (SDVERTEFKL…FGFTAQMEYY (202 aa)) is large ATPase domain (RuvB-L). ATP is bound by residues Leu42, Arg43, Gly84, Lys87, Thr88, Thr89, 150–152 (EDF), Arg193, Tyr203, and Arg240. Thr88 is a binding site for Mg(2+). The interval 204 to 274 (DTEDLTRVIS…AAQAALRVFD (71 aa)) is small ATPAse domain (RuvB-S). Residues 277–361 (ERGLDRLDRA…PEGAIGGTLF (85 aa)) form a head domain (RuvB-H) region. DNA-binding residues include Arg332 and Arg337.

It belongs to the RuvB family. In terms of assembly, homohexamer. Forms an RuvA(8)-RuvB(12)-Holliday junction (HJ) complex. HJ DNA is sandwiched between 2 RuvA tetramers; dsDNA enters through RuvA and exits via RuvB. An RuvB hexamer assembles on each DNA strand where it exits the tetramer. Each RuvB hexamer is contacted by two RuvA subunits (via domain III) on 2 adjacent RuvB subunits; this complex drives branch migration. In the full resolvosome a probable DNA-RuvA(4)-RuvB(12)-RuvC(2) complex forms which resolves the HJ.

The protein localises to the cytoplasm. It catalyses the reaction ATP + H2O = ADP + phosphate + H(+). In terms of biological role, the RuvA-RuvB-RuvC complex processes Holliday junction (HJ) DNA during genetic recombination and DNA repair, while the RuvA-RuvB complex plays an important role in the rescue of blocked DNA replication forks via replication fork reversal (RFR). RuvA specifically binds to HJ cruciform DNA, conferring on it an open structure. The RuvB hexamer acts as an ATP-dependent pump, pulling dsDNA into and through the RuvAB complex. RuvB forms 2 homohexamers on either side of HJ DNA bound by 1 or 2 RuvA tetramers; 4 subunits per hexamer contact DNA at a time. Coordinated motions by a converter formed by DNA-disengaged RuvB subunits stimulates ATP hydrolysis and nucleotide exchange. Immobilization of the converter enables RuvB to convert the ATP-contained energy into a lever motion, pulling 2 nucleotides of DNA out of the RuvA tetramer per ATP hydrolyzed, thus driving DNA branch migration. The RuvB motors rotate together with the DNA substrate, which together with the progressing nucleotide cycle form the mechanistic basis for DNA recombination by continuous HJ branch migration. Branch migration allows RuvC to scan DNA until it finds its consensus sequence, where it cleaves and resolves cruciform DNA. The chain is Holliday junction branch migration complex subunit RuvB from Corynebacterium aurimucosum (strain ATCC 700975 / DSM 44827 / CIP 107346 / CN-1) (Corynebacterium nigricans).